The chain runs to 107 residues: Phosphoribosyl-ATP pyrophosphatase (107 aa).

Belongs to the PRA-PH family.

It localises to the cytoplasm. The catalysed reaction is 1-(5-phospho-beta-D-ribosyl)-ATP + H2O = 1-(5-phospho-beta-D-ribosyl)-5'-AMP + diphosphate + H(+). The protein operates within amino-acid biosynthesis; L-histidine biosynthesis; L-histidine from 5-phospho-alpha-D-ribose 1-diphosphate: step 2/9. The chain is Phosphoribosyl-ATP pyrophosphatase (hisE) from Caulobacter vibrioides (strain ATCC 19089 / CIP 103742 / CB 15) (Caulobacter crescentus).